The chain runs to 379 residues: DnaJ homolog subfamily B member 14 (379 aa).

Over 1–244 (MEGNRDEAEK…GHEREEERGD (244 aa)) the chain is Cytoplasmic. A disordered region spans residues 55–94 (STAGNSPHCRKPSGGGDQSKPNCTKDSSSGSGESGKGYTK). One can recognise a J domain in the interval 108 to 172 (NYYEVLGVTK…EKRKQYDLTG (65 aa)). The disordered stretch occupies residues 221–241 (GRAGYSNQHQHRHSGHEREEE). Residues 245–265 (GGFSVFIQLMPIIVLILVSLL) traverse the membrane as a helical segment. At 266–379 (SQLMVSNPPY…ERLTSIYKGG (114 aa)) the chain is on the lumenal side.

The protein belongs to the DnaJ family. DNAJB12/DNAJB14 subfamily. As to quaternary structure, interacts (via J domain) with HSPA8/Hsc70. Forms a multiprotein complex, at least composed of DNAJB12, DNAJB14, HSPA8/Hsc70 and SGTA; interaction with DNAJB14 and HSPA8/Hsc70 is direct.

The protein resides in the endoplasmic reticulum membrane. It is found in the nucleus membrane. Functionally, acts as a co-chaperone with HSPA8/Hsc70; required to promote protein folding and trafficking, prevent aggregation of client proteins, and promote unfolded proteins to endoplasmic reticulum-associated degradation (ERAD) pathway. Acts by determining HSPA8/Hsc70's ATPase and polypeptide-binding activities. Can also act independently of HSPA8/Hsc70: together with DNAJB12, acts as a chaperone that promotes maturation of potassium channels KCND2 and KCNH2 by stabilizing nascent channel subunits and assembling them into tetramers. While stabilization of nascent channel proteins is dependent on HSPA8/Hsc70, the process of oligomerization of channel subunits is independent of HSPA8/Hsc70. When overexpressed, forms membranous structures together with DNAJB12 and HSPA8/Hsc70 within the nucleus; the role of these structures, named DJANGOs, is still unclear. The polypeptide is DnaJ homolog subfamily B member 14 (DNAJB14) (Bos taurus (Bovine)).